Here is a 32-residue protein sequence, read N- to C-terminus: Photosystem II reaction center protein T (32 aa).

A helical membrane pass occupies residues 3–23 (SIAYVLIFACLIGLFFFAIFF).

It belongs to the PsbT family. As to quaternary structure, PSII is composed of 1 copy each of membrane proteins PsbA, PsbB, PsbC, PsbD, PsbE, PsbF, PsbH, PsbI, PsbJ, PsbK, PsbL, PsbM, PsbT, PsbX, PsbY, PsbZ, Psb30/Ycf12, peripheral proteins PsbO, CyanoQ (PsbQ), PsbU, PsbV and a large number of cofactors. It forms dimeric complexes.

The protein localises to the cellular thylakoid membrane. Its function is as follows. Found at the monomer-monomer interface of the photosystem II (PS II) dimer, plays a role in assembly and dimerization of PSII. PSII is a light-driven water plastoquinone oxidoreductase, using light energy to abstract electrons from H(2)O, generating a proton gradient subsequently used for ATP formation. This Cyanothece sp. (strain PCC 7425 / ATCC 29141) protein is Photosystem II reaction center protein T.